We begin with the raw amino-acid sequence, 59 residues long: Large ribosomal subunit protein bL32 (59 aa).

The disordered stretch occupies residues 1–59; that stretch reads MAVQQNKKSPSKRGMHRSHDFLTTAPIAVEPTTGEVHLRHHVSPNGYYRGRKVVKTKND. Over residues 49–59 the composition is skewed to basic residues; the sequence is RGRKVVKTKND.

It belongs to the bacterial ribosomal protein bL32 family.

This chain is Large ribosomal subunit protein bL32, found in Ralstonia pickettii (strain 12J).